The sequence spans 56 residues: Large ribosomal subunit protein bL33 (56 aa).

This sequence belongs to the bacterial ribosomal protein bL33 family.

The sequence is that of Large ribosomal subunit protein bL33 from Tropheryma whipplei (strain TW08/27) (Whipple's bacillus).